Consider the following 98-residue polypeptide: Large ribosomal subunit protein uL23 (98 aa).

This sequence belongs to the universal ribosomal protein uL23 family. Part of the 50S ribosomal subunit. Contacts protein L29, and trigger factor when it is bound to the ribosome.

One of the early assembly proteins it binds 23S rRNA. One of the proteins that surrounds the polypeptide exit tunnel on the outside of the ribosome. Forms the main docking site for trigger factor binding to the ribosome. This Acidothermus cellulolyticus (strain ATCC 43068 / DSM 8971 / 11B) protein is Large ribosomal subunit protein uL23.